The chain runs to 348 residues: Phenylalanine--tRNA ligase alpha subunit (348 aa).

Glu269 is a binding site for Mg(2+).

It belongs to the class-II aminoacyl-tRNA synthetase family. Phe-tRNA synthetase alpha subunit type 1 subfamily. As to quaternary structure, tetramer of two alpha and two beta subunits. Requires Mg(2+) as cofactor.

The protein resides in the cytoplasm. It carries out the reaction tRNA(Phe) + L-phenylalanine + ATP = L-phenylalanyl-tRNA(Phe) + AMP + diphosphate + H(+). This is Phenylalanine--tRNA ligase alpha subunit from Dechloromonas aromatica (strain RCB).